Here is a 433-residue protein sequence, read N- to C-terminus: Urokinase-type plasminogen activator (433 aa).

Residues 1 to 20 (MRVLLACLLVCALVVSDSDG) form the signal peptide. The EGF-like domain occupies 29-65 (GESNCGCLNGGKCVTYKYFSNIQRCSCPKKFQGEHCE). Intrachain disulfides connect Cys33/Cys41, Cys35/Cys53, Cys55/Cys64, Cys72/Cys153, Cys93/Cys135, and Cys124/Cys148. The segment at 36-59 (LNGGKCVTYKYFSNIQRCSCPKKF) is binds urokinase plasminogen activator surface receptor. The Kringle domain maps to 72–153 (CYQGNGHSYR…FVQFCMVQDC (82 aa)). The connecting peptide stretch occupies residues 154 to 180 (SVGKSPSSPREKEEFQCGQKALRPRFK). Ser160 carries the phosphoserine modification. Intrachain disulfides connect Cys170–Cys301, Cys211–Cys227, Cys219–Cys290, Cys315–Cys384, Cys347–Cys363, and Cys374–Cys402. The region spanning 181–426 (IVGGQVTNAE…FLPWINTHTR (246 aa)) is the Peptidase S1 domain. Active-site charge relay system residues include His226 and Asp277. Ser378 (charge relay system) is an active-site residue.

It belongs to the peptidase S1 family. In terms of assembly, found in high and low molecular mass forms. Each consists of two chains, A and B. The high molecular mass form contains a long chain A which is cleaved to yield a short chain A. Forms heterodimer with SERPINA5. Binds LRP1B; binding is followed by internalization and degradation. Interacts with MRC2. Interacts with PLAUR. In complex with SERPINE1, interacts with PLAUR/uPAR. Interacts with SORL1 and LRP1, either alone or in complex with SERPINE1; these interactions are abolished in the presence of LRPAP1/RAP. The ternary complex composed of PLAUR-PLAU-PAI1 also interacts with SORLA. Post-translationally, produced as an inactive single-chain protein (pro-uPA or sc-uPA), is processed into the active disulfide-linked two-chain form of PLAU/uPA by a proteolytic event mediated, at least, by TMPRSS4.

It is found in the secreted. It catalyses the reaction Specific cleavage of Arg-|-Val bond in plasminogen to form plasmin.. Its activity is regulated as follows. Inhibited by SERPINA5. Inhibited by SERPINE1. In terms of biological role, specifically cleaves the zymogen plasminogen to form the active enzyme plasmin. This is Urokinase-type plasminogen activator (PLAU) from Bos taurus (Bovine).